The following is a 333-amino-acid chain: Holliday junction branch migration complex subunit RuvB (333 aa).

The large ATPase domain (RuvB-L) stretch occupies residues 1–181; that stretch reads MTRILDNDLI…FGITGHMEYY (181 aa). ATP contacts are provided by residues L20, R21, G62, K65, T66, T67, 128–130, R171, Y181, and R218; that span reads EDF. Residue T66 coordinates Mg(2+). Residues 182–252 form a small ATPAse domain (RuvB-S) region; it reads QTADLTEIVE…ITDKALTMLD (71 aa). Positions 255–333 are head domain (RuvB-H); the sequence is QEGLDYVDQK…HLGYPYEKKH (79 aa). DNA contacts are provided by R291, R310, R312, and R315.

This sequence belongs to the RuvB family. As to quaternary structure, homohexamer. Forms an RuvA(8)-RuvB(12)-Holliday junction (HJ) complex. HJ DNA is sandwiched between 2 RuvA tetramers; dsDNA enters through RuvA and exits via RuvB. An RuvB hexamer assembles on each DNA strand where it exits the tetramer. Each RuvB hexamer is contacted by two RuvA subunits (via domain III) on 2 adjacent RuvB subunits; this complex drives branch migration. In the full resolvosome a probable DNA-RuvA(4)-RuvB(12)-RuvC(2) complex forms which resolves the HJ.

It is found in the cytoplasm. The enzyme catalyses ATP + H2O = ADP + phosphate + H(+). Functionally, the RuvA-RuvB-RuvC complex processes Holliday junction (HJ) DNA during genetic recombination and DNA repair, while the RuvA-RuvB complex plays an important role in the rescue of blocked DNA replication forks via replication fork reversal (RFR). RuvA specifically binds to HJ cruciform DNA, conferring on it an open structure. The RuvB hexamer acts as an ATP-dependent pump, pulling dsDNA into and through the RuvAB complex. RuvB forms 2 homohexamers on either side of HJ DNA bound by 1 or 2 RuvA tetramers; 4 subunits per hexamer contact DNA at a time. Coordinated motions by a converter formed by DNA-disengaged RuvB subunits stimulates ATP hydrolysis and nucleotide exchange. Immobilization of the converter enables RuvB to convert the ATP-contained energy into a lever motion, pulling 2 nucleotides of DNA out of the RuvA tetramer per ATP hydrolyzed, thus driving DNA branch migration. The RuvB motors rotate together with the DNA substrate, which together with the progressing nucleotide cycle form the mechanistic basis for DNA recombination by continuous HJ branch migration. Branch migration allows RuvC to scan DNA until it finds its consensus sequence, where it cleaves and resolves cruciform DNA. This chain is Holliday junction branch migration complex subunit RuvB, found in Streptococcus equi subsp. zooepidemicus (strain MGCS10565).